A 160-amino-acid polypeptide reads, in one-letter code: SsrA-binding protein (160 aa).

It belongs to the SmpB family.

Its subcellular location is the cytoplasm. In terms of biological role, required for rescue of stalled ribosomes mediated by trans-translation. Binds to transfer-messenger RNA (tmRNA), required for stable association of tmRNA with ribosomes. tmRNA and SmpB together mimic tRNA shape, replacing the anticodon stem-loop with SmpB. tmRNA is encoded by the ssrA gene; the 2 termini fold to resemble tRNA(Ala) and it encodes a 'tag peptide', a short internal open reading frame. During trans-translation Ala-aminoacylated tmRNA acts like a tRNA, entering the A-site of stalled ribosomes, displacing the stalled mRNA. The ribosome then switches to translate the ORF on the tmRNA; the nascent peptide is terminated with the 'tag peptide' encoded by the tmRNA and targeted for degradation. The ribosome is freed to recommence translation, which seems to be the essential function of trans-translation. This chain is SsrA-binding protein, found in Sodalis glossinidius (strain morsitans).